A 66-amino-acid polypeptide reads, in one-letter code: MAKDAITGARTRFGNQRSHALNANRRSWKPNLQKVTVKINGDAAKTVYLTARTLRAGLKNGSIERV.

Belongs to the bacterial ribosomal protein bL28 family.

This Oenococcus oeni (strain ATCC BAA-331 / PSU-1) protein is Large ribosomal subunit protein bL28.